Reading from the N-terminus, the 485-residue chain is Glutamyl-tRNA(Gln) amidotransferase subunit A (485 aa).

Active-site charge relay system residues include K79 and S154. S178 acts as the Acyl-ester intermediate in catalysis.

It belongs to the amidase family. GatA subfamily. As to quaternary structure, heterotrimer of A, B and C subunits.

It catalyses the reaction L-glutamyl-tRNA(Gln) + L-glutamine + ATP + H2O = L-glutaminyl-tRNA(Gln) + L-glutamate + ADP + phosphate + H(+). In terms of biological role, allows the formation of correctly charged Gln-tRNA(Gln) through the transamidation of misacylated Glu-tRNA(Gln) in organisms which lack glutaminyl-tRNA synthetase. The reaction takes place in the presence of glutamine and ATP through an activated gamma-phospho-Glu-tRNA(Gln). This is Glutamyl-tRNA(Gln) amidotransferase subunit A from Clostridium botulinum (strain Loch Maree / Type A3).